Here is a 210-residue protein sequence, read N- to C-terminus: Tetraspanin-31 (210 aa).

At 1-12 (MVCGGFACSRNA) the chain is on the cytoplasmic side. Residues 13–33 (LCALNVVYMLVGFLLIGVAAW) traverse the membrane as a helical segment. Over 34–44 (GKGLGVVSSIH) the chain is Extracellular. Residues 45 to 65 (IIGGVIAVGVFLLLIAVAGLV) form a helical membrane-spanning segment. Over 66–72 (GAANHHQ) the chain is Cytoplasmic. Residues 73-93 (VLLFFYMIILGLVFIFQFGIS) traverse the membrane as a helical segment. Over 94–173 (CSCLAINRNT…FLKHSDKALK (80 aa)) the chain is Extracellular. Residues Asn-109, Asn-117, and Asn-134 are each glycosylated (N-linked (GlcNAc...) asparagine). A helical membrane pass occupies residues 174–194 (ILGGVGLFFSFTEILGVWLAM). Topologically, residues 195–210 (RFRNQKDPRANPSAFL) are cytoplasmic.

Belongs to the tetraspanin (TM4SF) family.

Its subcellular location is the membrane. The chain is Tetraspanin-31 (Tspan31) from Mus musculus (Mouse).